The following is a 221-amino-acid chain: Adenylate kinase (221 aa).

10-15 (GAGKGT) serves as a coordination point for ATP. The interval 30 to 59 (STGDIFRQNLRDNTELGKLAKEYMDKGLLV) is NMP. AMP-binding positions include threonine 31, arginine 36, 57–59 (LLV), 85–88 (GYPR), and glutamine 92. The interval 126 to 163 (GRRVCPVCGATYHIKTSPPKVDNVCDKCGSELIQRSDD) is LID. An ATP-binding site is contributed by arginine 127. 2 residues coordinate Zn(2+): cysteine 130 and cysteine 133. ATP is bound at residue 136–137 (TY). Residues cysteine 150 and cysteine 153 each contribute to the Zn(2+) site. Positions 160 and 171 each coordinate AMP. Residue lysine 199 participates in ATP binding.

The protein belongs to the adenylate kinase family. In terms of assembly, monomer.

The protein localises to the cytoplasm. It catalyses the reaction AMP + ATP = 2 ADP. It participates in purine metabolism; AMP biosynthesis via salvage pathway; AMP from ADP: step 1/1. Functionally, catalyzes the reversible transfer of the terminal phosphate group between ATP and AMP. Plays an important role in cellular energy homeostasis and in adenine nucleotide metabolism. The chain is Adenylate kinase from Caldanaerobacter subterraneus subsp. tengcongensis (strain DSM 15242 / JCM 11007 / NBRC 100824 / MB4) (Thermoanaerobacter tengcongensis).